A 171-amino-acid polypeptide reads, in one-letter code: Shikimate kinase (171 aa).

Residue 14–19 participates in ATP binding; the sequence is GAGKST. Ser-18 provides a ligand contact to Mg(2+). Residues Asp-36, Arg-60, and Gly-82 each coordinate substrate. Residue Arg-120 coordinates ATP. Residue Arg-139 participates in substrate binding. Residue Gln-156 participates in ATP binding.

It belongs to the shikimate kinase family. As to quaternary structure, monomer. Mg(2+) serves as cofactor.

It localises to the cytoplasm. It carries out the reaction shikimate + ATP = 3-phosphoshikimate + ADP + H(+). The protein operates within metabolic intermediate biosynthesis; chorismate biosynthesis; chorismate from D-erythrose 4-phosphate and phosphoenolpyruvate: step 5/7. In terms of biological role, catalyzes the specific phosphorylation of the 3-hydroxyl group of shikimic acid using ATP as a cosubstrate. The protein is Shikimate kinase of Shewanella sp. (strain ANA-3).